We begin with the raw amino-acid sequence, 357 residues long: MNPERWAADLVSNVKDYGKRIIDYAHEKTSNPQPVTVHTTNSAKGRLGEFLYQNRVSVGLGSAALFLAGLSYYKRYDYVRKRRAPRAPNHQKTQVVVLSAWNPLASVIAHDLDRRGFIVVVLVRDASEAATVSLQQRPYIQSLIVTHNEAVERFLLSFSNQSGPKEYALRLRGLILVPTGDSLYTPIENIGKDAWISAFQQLSESFSNVSRMIPLLKSQKARIIGLSHGILSAYEPPNYAVPSILSSSIETFLRTLKRETGLQVICIKLGNLSFLNYDHSSSPGKSNYPPSLCTERKVLNKIFDSLLGCWPSPTRHVGCRTFFMVTVSRFLPTCVIDGIFSLFGKFHFFSCSLIKRS.

Residue serine 282 is modified to Phosphoserine.

Belongs to the UPF0744 family.

Its subcellular location is the cytoplasm. The chain is UPF0744 protein C106.03 from Schizosaccharomyces pombe (strain 972 / ATCC 24843) (Fission yeast).